Consider the following 1001-residue polypeptide: Receptor-type tyrosine-protein phosphatase N2 (1001 aa).

The first 27 residues, 1–27 (MGPPLPLLLLLLLPPPLPRALPAPASA), serve as a signal peptide directing secretion. Residues 1 to 407 (MGPPLPLLLL…PEGPLLEKSS (407 aa)) form an involved in localization to secretory granules; interaction with CPE region. The Extracellular segment spans residues 28–600 (RGRQLPGRLG…HQEEQEDSTK (573 aa)). Position 259 is an omega-N-methylarginine (Arg-259). Disordered regions lie at residues 271-296 (PFSATALSQRWPPPPGDAKDSPSMDD), 308-359 (QQNS…DAPE), and 394-459 (SPLL…LEDQ). Over residues 312 to 325 (EVDRLGPLKEEKAD) the composition is skewed to basic and acidic residues. Ser-339 is subject to Phosphoserine. A compositionally biased stretch (basic and acidic residues) spans 340–355 (QESHGRGAEGQPREQT). A compositionally biased stretch (low complexity) spans 394-404 (SPLLPEGPLLE). Over residues 405 to 416 (KSSREEIKKSEQ) the composition is skewed to basic and acidic residues. Residues 417 to 428 (PEEVLSSEEETA) show a composition bias toward acidic residues. Phosphoserine occurs at positions 422 and 423. The segment covering 429 to 459 (GVEHVRSRTYSKDLFERKPNSEPQPRRLEDQ) has biased composition (basic and acidic residues). Asn-550 carries N-linked (GlcNAc...) asparagine glycosylation. A helical transmembrane segment spans residues 601–621 (FILLTFLSIACILGVLLASSL). Topologically, residues 622–1001 (AYCLRHNSHY…VNAILKALPQ (380 aa)) are cytoplasmic. The Tyrosine-based internalization motif motif lies at 652-661 (YQELCRQRMA). The tract at residues 663–705 (RPQDRSEGPHTSRINSVSSQFSDGPMPSPSARSSTSSWSEEPV) is disordered. Residues 674–684 (SRINSVSSQFS) show a composition bias toward polar residues. A phosphoserine mark is found at Ser-678 and Ser-684. A compositionally biased stretch (low complexity) spans 691–705 (PSARSSTSSWSEEPV). Thr-697 bears the Phosphothreonine mark. Positions 731–991 (LEKEWEALCA…EFALTAVAEE (261 aa)) constitute a Tyrosine-protein phosphatase domain. Residues Asp-899 and 931-937 (CSDGAGR) contribute to the substrate site. Cys-931 functions as the Phosphocysteine intermediate in the catalytic mechanism. The residue at position 956 (Lys-956) is an N6-acetyllysine. Gln-976 provides a ligand contact to substrate. The short motif at 990 to 996 (EEVNAIL) is the Leucine-based sorting signal element.

It belongs to the protein-tyrosine phosphatase family. As to quaternary structure, self-associates. Interacts (via cytoplasmic domain) with PTPRN (via cytoplasmic domain). Interacts (precursor form) with CPE. Interacts with HAP1 isoform A. Interacts with AP2A1 or AP2A2 and AP1G1; indicative for an association with adaptor protein complex 2 (AP-2) and adaptor protein complex 1 (AP-1). Interacts with AP2M1; indicative for an association with adaptor protein complex 2 (AP-2). Interacts with MYO5A. Post-translationally, subject to proteolytic cleavage at multiple sites during maturation of secretory granules. In the brain at least IA-2beta71, IA-2beta64 and IA-2beta60 have been detected, in the pancreas and a pancreatic beta cell line only IA-2beta60 has been detected. In terms of tissue distribution, detected in brain. Detected in pancreas islets (at protein level). Detected in pancreas and brain.

The protein localises to the cytoplasmic vesicle. It localises to the secretory vesicle membrane. Its subcellular location is the secretory vesicle. The protein resides in the synaptic vesicle membrane. The catalysed reaction is O-phospho-L-tyrosyl-[protein] + H2O = L-tyrosyl-[protein] + phosphate. Functionally, plays a role in vesicle-mediated secretory processes. Required for normal accumulation of secretory vesicles in hippocampus, pituitary and pancreatic islets. Required for the accumulation of normal levels of insulin-containing vesicles and preventing their degradation. Plays a role in insulin secretion in response to glucose stimuli. Required for normal accumulation of the neurotransmitters norepinephrine, dopamine and serotonin in the brain. In females, but not in males, required for normal accumulation and secretion of pituitary hormones, such as luteinizing hormone (LH) and follicle-stimulating hormone (FSH). Required to maintain normal levels of renin expression and renin release. May regulate catalytic active protein-tyrosine phosphatases such as PTPRA through dimerization. Has phosphatidylinositol phosphatase activity; the PIPase activity is involved in its ability to regulate insulin secretion. Can dephosphorylate phosphatidylinositol 4,5-biphosphate (PI(4,5)P2), phosphatidylinositol 5-phosphate and phosphatidylinositol 3-phosphate. Regulates PI(4,5)P2 level in the plasma membrane and localization of cofilin at the plasma membrane and thus is indirectly involved in regulation of actin dynamics related to cell migration and metastasis; upon hydrolysis of PI(4,5)P2 cofilin is released from the plasma membrane and acts in the cytoplasm in severing F-actin filaments. The sequence is that of Receptor-type tyrosine-protein phosphatase N2 (Ptprn2) from Mus musculus (Mouse).